The sequence spans 925 residues: Translation initiation factor IF-2 (925 aa).

Residues 190–329 form a disordered region; the sequence is PAAPTSEAAP…RRRDEREAAV (140 aa). 3 stretches are compositionally biased toward pro residues: residues 199 to 209, 217 to 238, and 279 to 288; these read PPEPEPTPLPA, PVRPPAPPAPAKPTPAPAPAPR, and RPVPAQPAPQ. The span at 289–307 shows a compositional bias: low complexity; the sequence is TPTRSGSGIAKKGAITKAG. Residues 320–329 show a composition bias toward basic and acidic residues; it reads RRRDEREAAV. The region spanning 417–589 is the tr-type G domain; that stretch reads VRPPVVTIMG…LLLVADYELE (173 aa). The tract at residues 426–433 is G1; that stretch reads GHVDHGKT. A GTP-binding site is contributed by 426–433; it reads GHVDHGKT. The interval 451–455 is G2; sequence GITQH. Positions 476–479 are G3; the sequence is DTPG. GTP contacts are provided by residues 476-480 and 530-533; these read DTPGH and NKVD. The G4 stretch occupies residues 530 to 533; it reads NKVD. The segment at 566–568 is G5; that stretch reads SAK.

The protein belongs to the TRAFAC class translation factor GTPase superfamily. Classic translation factor GTPase family. IF-2 subfamily.

It is found in the cytoplasm. One of the essential components for the initiation of protein synthesis. Protects formylmethionyl-tRNA from spontaneous hydrolysis and promotes its binding to the 30S ribosomal subunits. Also involved in the hydrolysis of GTP during the formation of the 70S ribosomal complex. This is Translation initiation factor IF-2 from Gloeobacter violaceus (strain ATCC 29082 / PCC 7421).